The following is a 223-amino-acid chain: Small ribosomal subunit protein uS3 (223 aa).

The KH type-2 domain maps to 39-107; the sequence is VRSYLAKKLS…PVHINIQEIR (69 aa).

This sequence belongs to the universal ribosomal protein uS3 family. As to quaternary structure, part of the 30S ribosomal subunit. Forms a tight complex with proteins S10 and S14.

Functionally, binds the lower part of the 30S subunit head. Binds mRNA in the 70S ribosome, positioning it for translation. The sequence is that of Small ribosomal subunit protein uS3 from Nitrosococcus oceani (strain ATCC 19707 / BCRC 17464 / JCM 30415 / NCIMB 11848 / C-107).